A 653-amino-acid polypeptide reads, in one-letter code: MTTPLIELQGVSRSYCQGDATVNVLNDIHLRIDPGEMVAIIGSSGSGKSTLMNILGCLDRPSGGEYRIRGRDVAQLTPDALAALRREHVGFIFQHYHLMPELSAVGNVEIPAVYANRPRQERRRRAAALLDRLGLAGKHHHCPAQLSGGQQQRVSIARALMNGGEIILADEPTGALDSASGKEVLAILTELNRQGHTLVIVTHDMAVARHARRIIEIRDGRIVADTRTDQTPLAPPLLPCSAHPRRRRGAQFADRVRESLHMALKAMNAHRMRTLLTMAGIVFGIAAVVTVVGLGEGAREQTLRRINFLGTNVISIYPGKDFFDENAGAIRTLVPADAVALARQGYVDSVSPELGTSARLRYRNKSANVDVIGVGESYFRVRGLSLAEGRTFTSQQVAQATTDAIIDDNARRTLFAATGQSPLGQTLLLNTMAVRVIGVAAADTNITGYHSDRIHIWLPYTTILHRLMGQQHVNGIVVSTGAGIDNAAAERTIEQLMLQRHGVKDFMLFNDDKIRRSVMKTSMTFSVLITMVAMIALFIGSLGVMNIMLVSVTERTHEIGVRMAVGARRGDIMQQFLIEAVLVCLTGGLLGVLLALSGGALFSALAGDIFPMVTSWPAVSGAFLCACAIGMVFGYWPARNAARLNPVEALSSE.

The ABC transporter domain occupies 6–244 (IELQGVSRSY…PPLLPCSAHP (239 aa)). Residue 42-49 (GSSGSGKS) participates in ATP binding. A run of 4 helical transmembrane segments spans residues 275-295 (LLTMAGIVFGIAAVVTVVGLG), 525-545 (FSVLITMVAMIALFIGSLGVM), 576-596 (FLIEAVLVCLTGGLLGVLLAL), and 616-636 (WPAVSGAFLCACAIGMVFGYW).

This sequence belongs to the ABC transporter superfamily. Macrolide exporter (TC 3.A.1.122) family. Homodimer. Part of the tripartite efflux system MacAB-TolC, which is composed of an inner membrane transporter, MacB, a periplasmic membrane fusion protein, MacA, and an outer membrane component, TolC. The complex forms a large protein conduit and can translocate molecules across both the inner and outer membranes. Interacts with MacA.

The protein resides in the cell inner membrane. Its function is as follows. Part of the tripartite efflux system MacAB-TolC. MacB is a non-canonical ABC transporter that contains transmembrane domains (TMD), which form a pore in the inner membrane, and an ATP-binding domain (NBD), which is responsible for energy generation. Confers resistance against macrolides. The chain is Macrolide export ATP-binding/permease protein MacB from Sodalis glossinidius (strain morsitans).